We begin with the raw amino-acid sequence, 331 residues long: Probable staphylococcal-like nuclease CAN1 (331 aa).

Gly2 carries the N-myristoyl glycine lipid modification. Residue Cys10 is the site of S-palmitoyl cysteine attachment. A TNase-like domain is found at 136-313; sequence HTLPVDAKAV…QSGRKGLWAA (178 aa). Asp149 provides a ligand contact to Ca(2+). Arg220 is an active-site residue. Residue Asp225 participates in Ca(2+) binding. Residues Glu228 and Arg262 contribute to the active site. A disordered region spans residues 306–331; it reads GRKGLWAASRPQKPWEWRRDKRNGTA. Positions 318 to 331 are enriched in basic and acidic residues; the sequence is KPWEWRRDKRNGTA.

The protein belongs to the thermonuclease family. The cofactor is Ca(2+).

The protein localises to the cell membrane. Its function is as follows. Enzyme that catalyzes the hydrolysis of both DNA and RNA at the 5' position of the phosphodiester bond. The chain is Probable staphylococcal-like nuclease CAN1 from Oryza sativa subsp. japonica (Rice).